A 382-amino-acid polypeptide reads, in one-letter code: uncharacterized protein (382 aa).

The next 12 membrane-spanning stretches (helical) occupy residues 8 to 28 (VLLL…LNTL), 39 to 61 (PTWQ…TLLT), 75 to 95 (YLAS…VGFW), 102 to 122 (FIAG…LMCS), 131 to 151 (LLAA…LMIS), 157 to 177 (LMSV…PLLF), 204 to 224 (LGVN…GLMP), 236 to 256 (GIGF…WPIG), 265 to 284 (LLVL…AMLG), 289 to 311 (APAL…AWAC), 325 to 345 (ALLL…AMLM), and 349 to 369 (SDNL…LMLL).

Belongs to the major facilitator superfamily. YcaD (TC 2.A.1.26) family.

It localises to the cell inner membrane. This is an uncharacterized protein from Enterobacter sp. (strain 638).